The following is a 236-amino-acid chain: UPF0257 lipoprotein YnfC (236 aa).

A signal peptide spans 1 to 16; it reads MKYKLLPCLLAILLTG. Residue C17 is the site of N-palmitoyl cysteine attachment. The S-diacylglycerol cysteine moiety is linked to residue C17.

It belongs to the UPF0257 family.

It localises to the cell membrane. This Escherichia coli O45:K1 (strain S88 / ExPEC) protein is UPF0257 lipoprotein YnfC.